The primary structure comprises 982 residues: Serine/threonine-protein kinase PknD (982 aa).

The 292-residue stretch at 51-342 folds into the Protein kinase domain; sequence YQIIKSIGKG…ELIRDIENYL (292 aa). ATP contacts are provided by residues 57–65 and K80; that span reads IGKGGMGEV. The active-site Proton acceptor is the D186.

This sequence belongs to the protein kinase superfamily. Ser/Thr protein kinase family. Autophosphorylated on serine and threonine residues.

It catalyses the reaction L-seryl-[protein] + ATP = O-phospho-L-seryl-[protein] + ADP + H(+). The catalysed reaction is L-threonyl-[protein] + ATP = O-phospho-L-threonyl-[protein] + ADP + H(+). Together with the serine/threonine kinase Pkn1, may play a role in the specific interactions with host proteins during intracellular growth. This chain is Serine/threonine-protein kinase PknD, found in Protochlamydia amoebophila (strain UWE25).